We begin with the raw amino-acid sequence, 719 residues long: DNA ligase (719 aa).

NAD(+)-binding positions include 42 to 46, 92 to 93, and glutamate 126; these read DAAYD and SL. The N6-AMP-lysine intermediate role is filled by lysine 128. 4 residues coordinate NAD(+): arginine 149, glutamate 185, lysine 301, and lysine 325. Positions 430, 433, 448, and 454 each coordinate Zn(2+). The BRCT domain occupies 640 to 719; the sequence is ATGSPVEGKT…DDWFKLVGED (80 aa).

It belongs to the NAD-dependent DNA ligase family. LigA subfamily. Requires Mg(2+) as cofactor. The cofactor is Mn(2+).

The enzyme catalyses NAD(+) + (deoxyribonucleotide)n-3'-hydroxyl + 5'-phospho-(deoxyribonucleotide)m = (deoxyribonucleotide)n+m + AMP + beta-nicotinamide D-nucleotide.. In terms of biological role, DNA ligase that catalyzes the formation of phosphodiester linkages between 5'-phosphoryl and 3'-hydroxyl groups in double-stranded DNA using NAD as a coenzyme and as the energy source for the reaction. It is essential for DNA replication and repair of damaged DNA. This chain is DNA ligase, found in Brucella suis biovar 1 (strain 1330).